Here is an 89-residue protein sequence, read N- to C-terminus: Acylphosphatase (89 aa).

One can recognise an Acylphosphatase-like domain in the interval 3 to 88; the sequence is TLHLQIEGRV…GEYSGFEKRS (86 aa). Residues arginine 18 and asparagine 36 contribute to the active site.

It belongs to the acylphosphatase family.

The enzyme catalyses an acyl phosphate + H2O = a carboxylate + phosphate + H(+). The chain is Acylphosphatase (acyP) from Thiobacillus denitrificans (strain ATCC 25259 / T1).